The primary structure comprises 1068 residues: Receptor-like protein 13 (1068 aa).

A signal peptide spans 1-23 (MEGKLFLGQYLICVILLLGQLHG). The Extracellular portion of the chain corresponds to 24 to 986 (YKSCIEKERK…EADESTVDME (963 aa)). 2 N-linked (GlcNAc...) asparagine glycosylation sites follow: Asn-59 and Asn-97. LRR repeat units lie at residues 104 to 129 (FEDV…LFDD), 139 to 162 (LRNL…FLNA), 164 to 187 (TSLT…EFKD), 188 to 212 (LTNL…DYNS), 216 to 239 (FRKL…FLNS), 241 to 264 (TSLK…ELRD), 265 to 290 (LTNV…LFAL), 292 to 315 (KLKA…KFAK), 325 to 349 (WKNM…LTSL), 350 to 373 (TGLR…LANL), 375 to 397 (SLEY…LLAN), 398 to 423 (LSKL…SWKP), 424 to 447 (KFQL…LLHQ), 448 to 471 (KDLH…LLEN), 472 to 497 (NTKL…AHNL), 499 to 517 (FLNV…NFGW), 519 to 543 (LPHL…LDNM), 544 to 567 (KSIE…FLKG), and 569 to 594 (YNLT…NFTR). Asn-153 is a glycosylation site (N-linked (GlcNAc...) asparagine). N-linked (GlcNAc...) asparagine glycosylation occurs at Asn-202. An N-linked (GlcNAc...) asparagine glycan is attached at Asn-279. A glycan (N-linked (GlcNAc...) asparagine) is linked at Asn-397. Asn-471, Asn-482, and Asn-501 each carry an N-linked (GlcNAc...) asparagine glycan. N-linked (GlcNAc...) asparagine glycosylation is found at Asn-570 and Asn-591. The LRR 20; degenerate repeat unit spans residues 596–615 (WVMSMDNNLFTGNIGKGFRS). LRR repeat units follow at residues 616-639 (LPSL…WIGE), 641-664 (QGLF…LFNI), 665-688 (SYLQ…VSSI), 690-710 (HGAV…DTLL), and 711-734 (LNVI…INTQ). N-linked (GlcNAc...) asparagine glycosylation occurs at Asn-663. N-linked (GlcNAc...) asparagine glycosylation occurs at Asn-700. Residues Asn-735, Asn-745, Asn-771, Asn-780, and Asn-822 are each glycosylated (N-linked (GlcNAc...) asparagine). LRR repeat units follow at residues 736-757 (ISIL…FCSL) and 758-781 (SNIQ…LSNT). LRR repeat units follow at residues 846-870 (LKLL…LGGL), 871-893 (VELE…SFSG), 895-918 (KNVE…LTDM), and 920-943 (SLAV…QFNT). Asn-877 and Asn-882 each carry an N-linked (GlcNAc...) asparagine glycan. N-linked (GlcNAc...) asparagine glycans are attached at residues Asn-925 and Asn-930. Residues 987 to 1007 (SFYWSFVAAYVTILLGILASL) traverse the membrane as a helical segment. Over 1008–1068 (SFDSPWSRAW…PPALFHKTRT (61 aa)) the chain is Cytoplasmic.

This sequence belongs to the RLP family.

It localises to the cell membrane. This Arabidopsis thaliana (Mouse-ear cress) protein is Receptor-like protein 13.